Here is a 2694-residue protein sequence, read N- to C-terminus: MASRERLFELWMLYCTKKDPDYLKLWLDTFVSSYEQFLDVDFEKLPTRVDDMPPGISLLPDNILQVLRIQLLQCVQKMADGLEEQQQALSILLVKFFIILCRNLSNVEEIGTCSYINYVITMTTLYIQQLKSKKKEKEMADQTCIEEFVIHALAFCESLYDPYRNWRHRISGRILSTVEKSRQKYKPASLTVEFVPFFYQCFQESEHLKESLKCCLLHLFGAIVAGGQRNALQAISPATMEVLMRVLADCDSWEDGDPEEVGRKAELTLKCLTEVVHILLSSNSDQRQVETSTILENYFKLLNSDHSALPNQRRSRQWENRFIALQIKMLNTITAMLDCTDRPVLQAIFLNSNCFEHLIRLLQNCKVFQGQLDCLAISTIQALTAVMNKSPAAKEVFKERIGYTHMLEVLKSLGQPPLELLKELMNMAVEGDHTSVGILGISNVQPLLLLIQWLPELQSHDLQIFISDWLKRICCINRQSRTTCVNANMGIRIIETLDLHSSLHQTCAENLIAIHGSLGSQSVSSEEIRRLLRLLRVDESESVHPYVTPVTRAILTMARKLSLESALQYFNLSHSMAGISVPPIQKWPGSAFSFSAWFCLDQDQLTLGIANKGGKRKQLYSFFTGSGMGFEAFITHSGMLVVAVCTKREYATVMLPDHSFCDSLWHNITVVHMPGKRPFGQSFVYIYDNGQQKVSAPLRFPAMNEPFTSCCIGSAGQRTTTPPPSQIPDPPFSSPITPHRTSFGGILSSASWGGTIEKSKLITKLISAGTQDSEWGCPTSLEGQLGSVIIFYEPLQPPQVKALYLAGPNCLSPWKCQESDMADLPGNILLYYTAKACKNSICLDLSTNCLHGRLTGNKVVNWDIKDIINCIGGLNVLFPLLEQISHFSEGQIPEEKNESTVPESVTPVEGDWLVWTSTKASESRLERNLVATFILIVKHFIQRHPINQGNLIHSHGVATLGALLQKVPSTLMDVNVLMAVQLLIEQVSLEKNMQLLQQMYQYLLFDFRIWNRGDFPFRIGHIQYLSTIIKDSRRVFRKKYGVQFLLDTLRIYYGNGCKYNELSLDDIRTIRTSLYGLIKYFLCKGGSHEEIQSIMGYIAATNEEEQLFGILDVLFSLLRTSPTRGQLFLLLFEPGNADILYALLLNQKYSDRLREIIFKIMEQMLKCTNVYERSKQHIRLREVGYSGLGLLLNEALVNTSLIKNLTHQIINTDPVINFKDLLSVVYISHRAHINVRVAICRKVLQILQFQPDAAHQISQQVGWQDTLVRLFLKAKFENGNTLHKHSRAVLMKDNDKNMSTEDTKKNSDEKTDEEKITSFASANVSSDQWSLEDRHSLDSNTPLFPEDSSVGELSFKSENQEEFWHSNPSHLSLDLSGIDSCEMSDSGSQVPDSLPSTPSPVESTKSFSVHSDRESSITNDMGFSDDFSLLESQERCEEELLQLLTHILNYVMCKGLEKSDDDTWIERGQVFSALSKPGISSELLRPSDEIKLTLLQKMLEWAISENREAKTNPVTAENAFRLVLIIQDFLQSEGLVNSNMWTEKLLEDMMLLFDCLSVCYSESPVWVKLSQIQIQLLLGFIGRGNLQVCAMASAKLNTLLQTKVIENQDEACYILGKLEHVLSQSIKEQTEIYSFLIPLVRTLVSKIYELLFMNLHLPSLPFTNGSSSFFEDFQEYCNSNEWQVYIEKYIVPYMKQYEAHTFYDGHENMALYWKDCYEALMVNMHKRDREGGESKLKFQELFVEPFNRKARQENLRYNNMLKQLSSQQLATLRRWKAIQLYLTCERGPWAKRKQNPIHWKLANVENYSRMRLKLVPNYNFKTHEEASALRDNLGIQHSQPSSDTLLLEVVKQVKVSDMVEDKLDLPEEDITARVNVDEKEEQDQKEKLVLMEDCELITIIDVIPGRLEITTQHIYFYDGSIEKEDGVGFDFKWPHSQIREIHLRRYNLRRSALEIFHVDQSNYFLNFKKEVRNKIYSRLLSLHSPNSYYGSRSPQELFKASGLTQKWVNREISNFDYLIQINTMAGRTYNDLAQYPVFPWILQDYTSEELDLNNPAVFRDLSKPIGVVNEKNAKAMREKYENFEDPMGTIDKFHYGTHYSNSAGVMHYLIRVEPFTTLHIQLQSGRFDCADRQFHSIPATWQALMDNPYDVKELIPEFFYFPEFLENQNQFNLGRLQISKELVNDVILPKWAKSAEDFIYKHRKALESEYVSAHLHEWIDLIFGYKQRGPAAVEALNVFYYCSYEGAVDLDALTDEKERKALEGMINNFGQTPCQLLKEPHPPRLSAEEAVQKPTKIDTSTLNLFQHLPELKSFFIEGISDGIPLLKATIPKNQYRSFMSQGSPELLITISMNYVIGTHGWLPYDRNISNYFTFIKDQTVTNPKTQRSINGSFAPGLEITSKLFVVSHDAKLLFSAGYWDNSIQVMSLTKGKIISHIIRHMDIVTCLATDYCGIHLISGSRDTTCMIWQITQQGGVPVGLASKPFQILYGHTNEVLSVGISTELDMAVSGSRDGTVIIHTIQKGQYMRTLRPPCESSLFLTIPNLAISWEGHIVVYSSTEEKTTLKDKNALHLFSINGKYLGSQILKEQVSDICIIGEHIVTGSIQGFLSIRDLHSLNLSINPLAMRLPIHCVCVTKEYSHILVGLEDGKLIVVGVGKPAEMRSGQLSRKFWGSSKRLSQISAGETEYNTQDSK.

Disordered regions lie at residues 1289-1314 (VLMK…TDEE), 1330-1350 (SLED…DSSV), and 1381-1411 (CEMS…SVHS). A compositionally biased stretch (basic and acidic residues) spans 1290-1314 (LMKDNDKNMSTEDTKKNSDEKTDEE). A compositionally biased stretch (polar residues) spans 1383-1409 (MSDSGSQVPDSLPSTPSPVESTKSFSV). Residues 1883 to 1980 (DQKEKLVLME…VRNKIYSRLL (98 aa)) enclose the BEACH-type PH domain. The BEACH domain occupies 1992–2284 (RSPQELFKAS…QLLKEPHPPR (293 aa)). 2 WD repeats span residues 2439–2478 (RHMD…GVPV) and 2490–2531 (GHTN…RTLR).

The protein belongs to the WD repeat neurobeachin family. Highly expressed in brain, kidney, prostate and testis. Weakly expressed in ovary, small intestine, colon and peripheral blood leukocytes. May be correlative to several tumors, such as ovary serous adenocarcinoma and metastasis mammary gland carcinoma breast.

This Homo sapiens (Human) protein is Neurobeachin-like protein 1 (NBEAL1).